A 1553-amino-acid polypeptide reads, in one-letter code: Sterol 3-beta-glucosyltransferase (1553 aa).

Composition is skewed to polar residues over residues 1–10 (MASSQPTSSG) and 25–36 (LNTETSSSQHRA). Disordered regions lie at residues 1 to 106 (MASS…NEED) and 189 to 270 (PASA…GLAP). Positions 90–100 (LPDRLKDNGKE) are enriched in basic and acidic residues. The segment covering 211-222 (LLQSVPSLSRLS) has biased composition (low complexity). The span at 223–232 (SSHKSKKTKQ) shows a compositional bias: basic residues. 2 GRAM domains span residues 323 to 370 (KKLK…HLPK) and 464 to 495 (SLQRVIFRSHNDGDSVKISIPIRNILDIEEAQ). One can recognise a PH domain in the interval 374–470 (EIAKSGYLSK…WVKSLQRVIF (97 aa)). Disordered regions lie at residues 542–569 (SPEDSGANDAPKGTGGDRAIGDNLGSPR), 611–662 (FSRR…FDDP), and 805–825 (GKKHYDHPAGRRTEREDVEDD). Residues 633-650 (LHGDGRRSFSKPRHEPHA) show a composition bias toward basic and acidic residues. The segment covering 651–662 (STDSYAQSFDDP) has biased composition (polar residues). Over residues 810–819 (DHPAGRRTER) the composition is skewed to basic and acidic residues. The 67-residue stretch at 834-900 (ARFQAHFALP…KDIETVDKEK (67 aa)) folds into the GRAM 3 domain. Residues S1020, R1021, D1023, A1328, H1330, H1343, S1346, G1347, T1348, D1367, and Q1368 each coordinate UDP-alpha-D-glucose. Disordered regions lie at residues 1446-1504 (KHQS…GSMS) and 1527-1553 (PALGSRVLSSPPTSPGAMRGAGGVKYV). The segment covering 1466-1488 (PEDDQGQAAEEDDIDADDEEEES) has biased composition (acidic residues).

The protein belongs to the glycosyltransferase 28 family.

It is found in the cytoplasm. The protein resides in the preautophagosomal structure membrane. It catalyses the reaction a sterol + UDP-alpha-D-glucose = a sterol 3-beta-D-glucoside + UDP + H(+). The enzyme catalyses ergosterol + UDP-alpha-D-glucose = ergosteryl 3-beta-D-glucoside + UDP + H(+). Its function is as follows. Sterol glycosyltransferase responsible for the glycosylation of ergosterol to form ergosterol-glucoside. The protein is Sterol 3-beta-glucosyltransferase (apg-12) of Neurospora crassa (strain ATCC 24698 / 74-OR23-1A / CBS 708.71 / DSM 1257 / FGSC 987).